The primary structure comprises 366 residues: Protein-glutamate methylesterase/protein-glutamine glutaminase (366 aa).

Residues 5–123 (RVLVVDDSVV…SVGRSMEQVR (119 aa)) form the Response regulatory domain. Residue Asp-56 is modified to 4-aspartylphosphate. The CheB-type methylesterase domain maps to 163-355 (PLGGHRLLVI…PEILRRLARQ (193 aa)). Active-site residues include Ser-175, His-201, and Asp-297.

Belongs to the CheB family. Phosphorylated by CheA. Phosphorylation of the N-terminal regulatory domain activates the methylesterase activity.

Its subcellular location is the cytoplasm. The enzyme catalyses [protein]-L-glutamate 5-O-methyl ester + H2O = L-glutamyl-[protein] + methanol + H(+). The catalysed reaction is L-glutaminyl-[protein] + H2O = L-glutamyl-[protein] + NH4(+). Functionally, involved in chemotaxis. Part of a chemotaxis signal transduction system that modulates chemotaxis in response to various stimuli. Catalyzes the demethylation of specific methylglutamate residues introduced into the chemoreceptors (methyl-accepting chemotaxis proteins or MCP) by CheR. Also mediates the irreversible deamidation of specific glutamine residues to glutamic acid. The polypeptide is Protein-glutamate methylesterase/protein-glutamine glutaminase (Nocardioides sp. (strain ATCC BAA-499 / JS614)).